The following is a 457-amino-acid chain: Dihydrolipoyllysine-residue acetyltransferase component of pyruvate dehydrogenase complex, mitochondrial (457 aa).

The N-terminal 30 residues, 1–30, are a transit peptide targeting the mitochondrion; the sequence is MLSAALRRRVLAPTHSALRTGFAAHVVRHY. In terms of domain architecture, Lipoyl-binding spans 36-112; it reads HQVIKMPALS…PVGSPIAVLV (77 aa). K77 carries the N6-lipoyllysine modification. The segment at 129–168 is disordered; that stretch reads AGGDAAKPAAPKKEEKSESKSESASAPEPTPEPQQYQSQG. The segment covering 139–149 has biased composition (basic and acidic residues); the sequence is PKKEEKSESKS. K148 carries the N6-crotonyllysine modification. The region spanning 179 to 216 is the Peripheral subunit-binding (PSBD) domain; sequence NISASAKRLAREKGISIDGLKGTGKNGQITEEDVKKAI. Residues H430 and D434 contribute to the active site.

Belongs to the 2-oxoacid dehydrogenase family. As to quaternary structure, eukaryotic pyruvate dehydrogenase (PDH) complexes are organized as a core consisting of the oligomeric dihydrolipoamide acetyl-transferase (E2), around which are arranged multiple copies of pyruvate dehydrogenase (E1), dihydrolipoamide dehydrogenase (E3) and protein X (E3BP) bound by non-covalent bonds. Interacts with SIR5; the interaction is direct. (R)-lipoate is required as a cofactor. Post-translationally, decrotonylated at 'Lys-148' by SIR5, which inhibits the activity of the pyruvate dehydrogenase complex (PDC).

Its subcellular location is the mitochondrion matrix. It catalyses the reaction N(6)-[(R)-dihydrolipoyl]-L-lysyl-[protein] + acetyl-CoA = N(6)-[(R)-S(8)-acetyldihydrolipoyl]-L-lysyl-[protein] + CoA. Its function is as follows. The pyruvate dehydrogenase complex catalyzes the overall conversion of pyruvate to acetyl-CoA and CO(2). High pyruvate dehydrogenase complex activity is required for sufficient energy production during germination of conidia. This is Dihydrolipoyllysine-residue acetyltransferase component of pyruvate dehydrogenase complex, mitochondrial from Fusarium oxysporum f. sp. lycopersici (strain 4287 / CBS 123668 / FGSC 9935 / NRRL 34936) (Fusarium vascular wilt of tomato).